A 101-amino-acid polypeptide reads, in one-letter code: Small ribosomal subunit protein uS14 (101 aa).

This sequence belongs to the universal ribosomal protein uS14 family. As to quaternary structure, part of the 30S ribosomal subunit. Contacts proteins S3 and S10.

In terms of biological role, binds 16S rRNA, required for the assembly of 30S particles and may also be responsible for determining the conformation of the 16S rRNA at the A site. This Rhizobium meliloti (strain 1021) (Ensifer meliloti) protein is Small ribosomal subunit protein uS14.